The primary structure comprises 200 residues: Holliday junction branch migration complex subunit RuvA (200 aa).

The domain I stretch occupies residues 1 to 64 (MIAKLKGLLD…ENDMRLLGFA (64 aa)). Residues 65-143 (EASERDWFRL…ALPSAPGGAA (79 aa)) form a domain II region. The segment at 144-154 (MAANPAGGASA) is flexible linker. A domain III region spans residues 154-200 (ADAVSALENLGFKPAIAARAVATAQGELGEGASESELIRVALKRAAG).

This sequence belongs to the RuvA family. In terms of assembly, homotetramer. Forms an RuvA(8)-RuvB(12)-Holliday junction (HJ) complex. HJ DNA is sandwiched between 2 RuvA tetramers; dsDNA enters through RuvA and exits via RuvB. An RuvB hexamer assembles on each DNA strand where it exits the tetramer. Each RuvB hexamer is contacted by two RuvA subunits (via domain III) on 2 adjacent RuvB subunits; this complex drives branch migration. In the full resolvosome a probable DNA-RuvA(4)-RuvB(12)-RuvC(2) complex forms which resolves the HJ.

The protein localises to the cytoplasm. Functionally, the RuvA-RuvB-RuvC complex processes Holliday junction (HJ) DNA during genetic recombination and DNA repair, while the RuvA-RuvB complex plays an important role in the rescue of blocked DNA replication forks via replication fork reversal (RFR). RuvA specifically binds to HJ cruciform DNA, conferring on it an open structure. The RuvB hexamer acts as an ATP-dependent pump, pulling dsDNA into and through the RuvAB complex. HJ branch migration allows RuvC to scan DNA until it finds its consensus sequence, where it cleaves and resolves the cruciform DNA. This Erythrobacter litoralis (strain HTCC2594) protein is Holliday junction branch migration complex subunit RuvA.